The primary structure comprises 133 residues: Large-conductance mechanosensitive channel (133 aa).

The next 2 membrane-spanning stretches (helical) occupy residues 10 to 30 (FAVK…GAFG) and 76 to 96 (GAFI…FSMV).

The protein belongs to the MscL family. In terms of assembly, homopentamer.

It localises to the cell inner membrane. Functionally, channel that opens in response to stretch forces in the membrane lipid bilayer. May participate in the regulation of osmotic pressure changes within the cell. The sequence is that of Large-conductance mechanosensitive channel from Haemophilus ducreyi (strain 35000HP / ATCC 700724).